Consider the following 254-residue polypeptide: Glycerol operon regulatory protein (254 aa).

Positions 5–67 (IQSLERAAAM…PASGRYQLGA (63 aa)) constitute an HTH iclR-type domain. Residues 27–46 (LSDIASTLGLAKGTAHGILR) constitute a DNA-binding region (H-T-H motif). In terms of domain architecture, IclR-ED spans 82-251 (LRARALVWTD…AAAVSRDLGA (170 aa)).

May be an activator protein for the gylABX operon. The chain is Glycerol operon regulatory protein (gylR) from Streptomyces griseus.